Reading from the N-terminus, the 610-residue chain is Isocitrate dehydrogenase kinase/phosphatase (610 aa).

ATP-binding positions include 359-365 (APGFKGT) and K380. D419 is an active-site residue.

It belongs to the AceK family.

The protein localises to the cytoplasm. The enzyme catalyses L-seryl-[isocitrate dehydrogenase] + ATP = O-phospho-L-seryl-[isocitrate dehydrogenase] + ADP + H(+). In terms of biological role, bifunctional enzyme which can phosphorylate or dephosphorylate isocitrate dehydrogenase (IDH) on a specific serine residue. This is a regulatory mechanism which enables bacteria to bypass the Krebs cycle via the glyoxylate shunt in response to the source of carbon. When bacteria are grown on glucose, IDH is fully active and unphosphorylated, but when grown on acetate or ethanol, the activity of IDH declines drastically concomitant with its phosphorylation. The protein is Isocitrate dehydrogenase kinase/phosphatase of Rhodopseudomonas palustris (strain TIE-1).